The chain runs to 609 residues: UvrABC system protein C (609 aa).

Residues 15–93 form the GIY-YIG domain; sequence SSAGVYRMYD…IKQYMPKYNV (79 aa). The UVR domain occupies 202–237; that stretch reads QQVVTNLVTKMEQAAEEFHYEQAAAYRDQITALRKV.

Belongs to the UvrC family. Interacts with UvrB in an incision complex.

It localises to the cytoplasm. Its function is as follows. The UvrABC repair system catalyzes the recognition and processing of DNA lesions. UvrC both incises the 5' and 3' sides of the lesion. The N-terminal half is responsible for the 3' incision and the C-terminal half is responsible for the 5' incision. The sequence is that of UvrABC system protein C from Shewanella denitrificans (strain OS217 / ATCC BAA-1090 / DSM 15013).